The following is a 211-amino-acid chain: 3-demethoxyubiquinol 3-hydroxylase (211 aa).

Glutamate 60, glutamate 90, histidine 93, glutamate 142, glutamate 174, and histidine 177 together coordinate Fe cation.

It belongs to the COQ7 family. Fe cation is required as a cofactor.

It is found in the cell membrane. It catalyses the reaction a 5-methoxy-2-methyl-3-(all-trans-polyprenyl)benzene-1,4-diol + AH2 + O2 = a 3-demethylubiquinol + A + H2O. It functions in the pathway cofactor biosynthesis; ubiquinone biosynthesis. In terms of biological role, catalyzes the hydroxylation of 2-nonaprenyl-3-methyl-6-methoxy-1,4-benzoquinol during ubiquinone biosynthesis. The protein is 3-demethoxyubiquinol 3-hydroxylase of Francisella tularensis subsp. tularensis (strain FSC 198).